The primary structure comprises 68 residues: Large ribosomal subunit protein uL29 (68 aa).

This sequence belongs to the universal ribosomal protein uL29 family.

The sequence is that of Large ribosomal subunit protein uL29 from Maricaulis maris (strain MCS10) (Caulobacter maris).